A 340-amino-acid polypeptide reads, in one-letter code: Guanine nucleotide-binding protein G(I)/G(S)/G(T) subunit beta-1 (340 aa).

Serine 2 carries the post-translational modification N-acetylserine. Serine 2 bears the Phosphoserine mark. WD repeat units lie at residues 46–94, 95–140, 141–181, 182–223, 224–267, 268–309, and 310–340; these read RTRR…HAIP, LRSS…RELA, GHTG…TTFT, GHTG…QTFT, GHES…YSHD, NIIC…GVLA, and GHDD…KIWN. A Phosphohistidine modification is found at histidine 266.

This sequence belongs to the WD repeat G protein beta family. As to quaternary structure, g proteins are composed of 3 units, alpha, beta and gamma. The heterodimer formed by GNB1 and GNG2 interacts with ARHGEF5. The heterodimer formed by GNB1 and GNG2 interacts with GRK2. Forms a complex with GNAO1 and GNG3. Interacts with ARHGEF18 and RASD2. Forms complexes with TAS2R14 and G-proteins; these complexes play a role in the perception of bitterness. Component of the TAS2R14-GNAI1 complex, consisting of TAS2R14, GNAI1, GNB1 and GNG2. Component of the TAS2R14-GNAT3 complex, consisting of TAS2R14, GNAT3, GNB1 and GNG2. Component of the TAS2R14-GNAS2 complex, consisting of TAS2R14, GNAS2, GNB1 and GNG2. Post-translationally, phosphorylation at His-266 by NDKB contributes to G protein activation by increasing the high energetic phosphate transfer onto GDP.

In terms of biological role, guanine nucleotide-binding proteins (G proteins) are involved as a modulator or transducer in various transmembrane signaling systems. The beta and gamma chains are required for the GTPase activity, for replacement of GDP by GTP, and for G protein-effector interaction. The sequence is that of Guanine nucleotide-binding protein G(I)/G(S)/G(T) subunit beta-1 (GNB1) from Pongo abelii (Sumatran orangutan).